The sequence spans 222 residues: Probable nicotinate-nucleotide adenylyltransferase (222 aa).

This sequence belongs to the NadD family.

The enzyme catalyses nicotinate beta-D-ribonucleotide + ATP + H(+) = deamido-NAD(+) + diphosphate. It participates in cofactor biosynthesis; NAD(+) biosynthesis; deamido-NAD(+) from nicotinate D-ribonucleotide: step 1/1. Functionally, catalyzes the reversible adenylation of nicotinate mononucleotide (NaMN) to nicotinic acid adenine dinucleotide (NaAD). The chain is Probable nicotinate-nucleotide adenylyltransferase from Pseudomonas syringae pv. tomato (strain ATCC BAA-871 / DC3000).